We begin with the raw amino-acid sequence, 251 residues long: SNAP25 homologous protein SNAP29 (251 aa).

The tract at residues 1-52 (MAPKNSSWNPFDDEKEAAKSFSLNPFDDDDDDKEVEKRFTSSLKPSGGKENQ) is disordered. A compositionally biased stretch (polar residues) spans 40–52 (TSSLKPSGGKENQ). One can recognise a t-SNARE coiled-coil homology domain in the interval 186 to 248 (KTQIAKQDEA…KQSNQRARYL (63 aa)).

This sequence belongs to the SNAP-25 family.

The protein localises to the membrane. Its subcellular location is the cytoplasm. SNAREs, soluble N-ethylmaleimide-sensitive factor-attachment protein receptors, are essential proteins for fusion of cellular membranes. SNAREs localized on opposing membranes assemble to form a trans-SNARE complex, an extended, parallel four alpha-helical bundle that drives membrane fusion. This is SNAP25 homologous protein SNAP29 (SNAP29) from Arabidopsis thaliana (Mouse-ear cress).